The primary structure comprises 353 residues: Holliday junction branch migration complex subunit RuvB (353 aa).

The large ATPase domain (RuvB-L) stretch occupies residues 4–185 (ADRLITAAGG…FGIVQRLEFY (182 aa)). ATP is bound by residues I24, R25, G66, K69, T70, T71, 132–134 (EDF), R175, Y185, and R222. A Mg(2+)-binding site is contributed by T70. The small ATPAse domain (RuvB-S) stretch occupies residues 186-256 (NIADLSTIVS…TADKALNLLD (71 aa)). Residues 259-353 (EHGFDHQDRR…DDVVDDPADL (95 aa)) are head domain (RuvB-H). DNA-binding residues include R295, R314, and R319.

This sequence belongs to the RuvB family. Homohexamer. Forms an RuvA(8)-RuvB(12)-Holliday junction (HJ) complex. HJ DNA is sandwiched between 2 RuvA tetramers; dsDNA enters through RuvA and exits via RuvB. An RuvB hexamer assembles on each DNA strand where it exits the tetramer. Each RuvB hexamer is contacted by two RuvA subunits (via domain III) on 2 adjacent RuvB subunits; this complex drives branch migration. In the full resolvosome a probable DNA-RuvA(4)-RuvB(12)-RuvC(2) complex forms which resolves the HJ.

It localises to the cytoplasm. It carries out the reaction ATP + H2O = ADP + phosphate + H(+). Functionally, the RuvA-RuvB-RuvC complex processes Holliday junction (HJ) DNA during genetic recombination and DNA repair, while the RuvA-RuvB complex plays an important role in the rescue of blocked DNA replication forks via replication fork reversal (RFR). RuvA specifically binds to HJ cruciform DNA, conferring on it an open structure. The RuvB hexamer acts as an ATP-dependent pump, pulling dsDNA into and through the RuvAB complex. RuvB forms 2 homohexamers on either side of HJ DNA bound by 1 or 2 RuvA tetramers; 4 subunits per hexamer contact DNA at a time. Coordinated motions by a converter formed by DNA-disengaged RuvB subunits stimulates ATP hydrolysis and nucleotide exchange. Immobilization of the converter enables RuvB to convert the ATP-contained energy into a lever motion, pulling 2 nucleotides of DNA out of the RuvA tetramer per ATP hydrolyzed, thus driving DNA branch migration. The RuvB motors rotate together with the DNA substrate, which together with the progressing nucleotide cycle form the mechanistic basis for DNA recombination by continuous HJ branch migration. Branch migration allows RuvC to scan DNA until it finds its consensus sequence, where it cleaves and resolves cruciform DNA. The polypeptide is Holliday junction branch migration complex subunit RuvB (Pseudomonas savastanoi pv. phaseolicola (strain 1448A / Race 6) (Pseudomonas syringae pv. phaseolicola (strain 1448A / Race 6))).